Reading from the N-terminus, the 364-residue chain is Long-wave-sensitive opsin 1 (364 aa).

The segment at Met1 to Thr23 is disordered. Topologically, residues Met1–Val52 are extracellular. Ser22 carries O-linked (GlcNAc) serine glycosylation. N-linked (GlcNAc...) asparagine glycosylation occurs at Asn34. Residues Tyr53–Ala77 form a helical membrane-spanning segment. Residues Thr78–Asn89 are Cytoplasmic-facing. The helical transmembrane segment at Trp90–Val115 threads the bilayer. Residues Ser116 to Glu129 lie on the Extracellular side of the membrane. Cys126 and Cys203 are disulfide-bonded. A helical membrane pass occupies residues Gly130 to Trp149. Residues Glu150–Leu168 are Cytoplasmic-facing. The helical transmembrane segment at Ala169 to Ser192 threads the bilayer. The Extracellular segment spans residues Arg193–Ser218. A helical membrane pass occupies residues Tyr219–Ile246. Over Arg247–Arg268 the chain is Cytoplasmic. A helical membrane pass occupies residues Met269 to Ala292. Over Ala293 to His300 the chain is Extracellular. A helical membrane pass occupies residues Pro301–Met325. Residue Lys312 is modified to N6-(retinylidene)lysine. At Asn326 to Ala364 the chain is on the cytoplasmic side.

The protein belongs to the G-protein coupled receptor 1 family. Opsin subfamily. Post-translationally, phosphorylated on some or all of the serine and threonine residues present in the C-terminal region. As to expression, the three color pigments are found in the cone photoreceptor cells.

It is found in the membrane. Visual pigments are the light-absorbing molecules that mediate vision. They consist of an apoprotein, opsin, covalently linked to cis-retinal. The protein is Long-wave-sensitive opsin 1 (OPN1LW) of Homo sapiens (Human).